The following is a 608-amino-acid chain: Granule-bound starch synthase 1, chloroplastic/amyloplastic (608 aa).

A chloroplast-targeting transit peptide spans 1 to 78; sequence MATVIAAHFV…NGRPAAKIIC (78 aa). Lys96 serves as a coordination point for ADP-alpha-D-glucose. The segment at 587-608 is disordered; it reads GSEPGTEGEEIAPLAKENVPTP.

It belongs to the glycosyltransferase 1 family. Bacterial/plant glycogen synthase subfamily. Synthesized in a number of different organs, but most abundantly in tubers.

The protein localises to the plastid. It localises to the chloroplast. It is found in the amyloplast. The catalysed reaction is an NDP-alpha-D-glucose + [(1-&gt;4)-alpha-D-glucosyl](n) = [(1-&gt;4)-alpha-D-glucosyl](n+1) + a ribonucleoside 5'-diphosphate + H(+). Its pathway is glycan biosynthesis; starch biosynthesis. In terms of biological role, responsible for the synthesis of amylose in reserve starch. The polypeptide is Granule-bound starch synthase 1, chloroplastic/amyloplastic (WAXY) (Manihot esculenta (Cassava)).